Reading from the N-terminus, the 215-residue chain is Chaperone protein TorD (215 aa).

This sequence belongs to the TorD/DmsD family. TorD subfamily.

It is found in the cytoplasm. Its function is as follows. Involved in the biogenesis of TorA. Acts on TorA before the insertion of the molybdenum cofactor and, as a result, probably favors a conformation of the apoenzyme that is competent for acquiring the cofactor. The sequence is that of Chaperone protein TorD from Shewanella piezotolerans (strain WP3 / JCM 13877).